The primary structure comprises 302 residues: Probable alpha-L-glutamate ligase (302 aa).

In terms of domain architecture, ATP-grasp spans 104–287; it reads LQLLSRKGLG…IAGQIIEYIE (184 aa). Residues Lys-141, 178 to 179, Asp-187, and 211 to 213 each bind ATP; these read EY and RSN. Mg(2+)-binding residues include Asp-248, Glu-260, and Asn-262. Mn(2+) is bound by residues Asp-248, Glu-260, and Asn-262.

Belongs to the RimK family. Requires Mg(2+) as cofactor. It depends on Mn(2+) as a cofactor.

The polypeptide is Probable alpha-L-glutamate ligase (Chromohalobacter salexigens (strain ATCC BAA-138 / DSM 3043 / CIP 106854 / NCIMB 13768 / 1H11)).